The primary structure comprises 146 residues: Hemoglobin subunit beta-1 (146 aa).

The region spanning 2–146 is the Globin domain; it reads HWTAEEKALI…VAHALARRYH (145 aa). His-92 provides a ligand contact to heme b.

The protein belongs to the globin family. In terms of assembly, heterotetramer of two alpha chains and two beta chains. Red blood cells.

Its function is as follows. Involved in oxygen transport from the lung to the various peripheral tissues. The chain is Hemoglobin subunit beta-1 from Saara hardwickii (Indian spiny-tailed lizard).